We begin with the raw amino-acid sequence, 362 residues long: DLA class I histocompatibility antigen, A9/A9 alpha chain (362 aa).

A signal peptide spans Met-1–Ala-24. An alpha-1 region spans residues Gly-25 to Ala-114. At Gly-25–Thr-306 the chain is on the extracellular side. N-linked (GlcNAc...) asparagine glycosylation is present at Asn-110. The interval Gly-115–Ala-207 is alpha-2. 2 cysteine pairs are disulfide-bonded: Cys-125-Cys-189 and Cys-228-Cys-284. The interval Asp-208–Trp-299 is alpha-3. The region spanning Pro-210–Thr-296 is the Ig-like C1-type domain. The segment at Glu-300–Thr-306 is connecting peptide. Residues Ile-307–Trp-329 traverse the membrane as a helical segment. The Cytoplasmic segment spans residues Arg-330 to Val-362. The tract at residues Arg-333–Val-362 is disordered.

It belongs to the MHC class I family. As to quaternary structure, heterodimer of an alpha chain and a beta chain (beta-2-microglobulin).

It localises to the membrane. In terms of biological role, involved in the presentation of foreign antigens to the immune system. This Canis lupus familiaris (Dog) protein is DLA class I histocompatibility antigen, A9/A9 alpha chain.